A 216-amino-acid chain; its full sequence is Adenylate kinase (216 aa).

10-15 (GAGKGT) is a binding site for ATP. The interval 30-59 (STGDMFRAAMKAETEMGLQAKSFIDKGALV) is NMP. Residues Thr31, Arg36, 57–59 (ALV), 85–88 (GFPR), and Gln92 each bind AMP. Residues 126–163 (GRRICKECGATYHLEFNPPAKADVCDKCGGELYQRSDD) form an LID region. Arg127 is a binding site for ATP. Residues Cys130 and Cys133 each coordinate Zn(2+). An ATP-binding site is contributed by 136–137 (TY). Residues Cys150 and Cys153 each contribute to the Zn(2+) site. 2 residues coordinate AMP: Arg160 and Arg171. Gln199 contacts ATP.

The protein belongs to the adenylate kinase family. Monomer.

It is found in the cytoplasm. It carries out the reaction AMP + ATP = 2 ADP. The protein operates within purine metabolism; AMP biosynthesis via salvage pathway; AMP from ADP: step 1/1. Its function is as follows. Catalyzes the reversible transfer of the terminal phosphate group between ATP and AMP. Plays an important role in cellular energy homeostasis and in adenine nucleotide metabolism. The sequence is that of Adenylate kinase from Bacillus cereus (strain ATCC 10987 / NRS 248).